A 368-amino-acid polypeptide reads, in one-letter code: Probable auxin efflux carrier component 5b (368 aa).

10 helical membrane passes run 7 to 27, 39 to 59, 71 to 91, 114 to 134, 145 to 165, 227 to 247, 251 to 271, 286 to 306, 312 to 332, and 347 to 367; these read VYKV…GYGS, CDAV…FDFA, VLAA…ACAA, CITG…VPLL, LIVQ…LLAF, VLGV…PSII, VLIM…LFMA, LGMA…AFAL, LLRL…FVFA, and IFGT…LGFI.

This sequence belongs to the auxin efflux carrier (TC 2.A.69.1) family. In terms of tissue distribution, expressed at low levels in roots and shoot apex.

It is found in the membrane. Its function is as follows. May act as a component of the auxin efflux carrier. The chain is Probable auxin efflux carrier component 5b from Oryza sativa subsp. japonica (Rice).